The sequence spans 31 residues: Ranatuerin-2PL (31 aa).

Cys23 and Cys29 are joined by a disulfide.

As to expression, expressed by the skin glands.

The protein localises to the secreted. Antimicrobial activity against Gram-negative bacterium E.coli. This Lithobates palustris (Pickerel frog) protein is Ranatuerin-2PL.